A 550-amino-acid polypeptide reads, in one-letter code: Glucose-6-phosphate isomerase (550 aa).

Residue Glu356 is the Proton donor of the active site. Active-site residues include His387 and Lys515.

It belongs to the GPI family.

The protein localises to the cytoplasm. The catalysed reaction is alpha-D-glucose 6-phosphate = beta-D-fructose 6-phosphate. Its pathway is carbohydrate biosynthesis; gluconeogenesis. It functions in the pathway carbohydrate degradation; glycolysis; D-glyceraldehyde 3-phosphate and glycerone phosphate from D-glucose: step 2/4. In terms of biological role, catalyzes the reversible isomerization of glucose-6-phosphate to fructose-6-phosphate. The polypeptide is Glucose-6-phosphate isomerase (Photobacterium profundum (strain SS9)).